Reading from the N-terminus, the 102-residue chain is Ribosomal silencing factor RsfS (102 aa).

The protein belongs to the Iojap/RsfS family. In terms of assembly, interacts with ribosomal protein uL14 (rplN).

It is found in the cytoplasm. Its function is as follows. Functions as a ribosomal silencing factor. Interacts with ribosomal protein uL14 (rplN), blocking formation of intersubunit bridge B8. Prevents association of the 30S and 50S ribosomal subunits and the formation of functional ribosomes, thus repressing translation. The chain is Ribosomal silencing factor RsfS from Haemophilus influenzae (strain ATCC 51907 / DSM 11121 / KW20 / Rd).